Consider the following 413-residue polypeptide: Multifunctional CCA protein (413 aa).

2 residues coordinate ATP: Gly-8 and Arg-11. CTP contacts are provided by Gly-8 and Arg-11. Residues Asp-21 and Asp-23 each contribute to the Mg(2+) site. Residues Arg-91, Arg-141, and Arg-144 each contribute to the ATP site. Arg-91, Arg-141, and Arg-144 together coordinate CTP. The region spanning 230–331 (TGAHLLLVLD…VRLLERCDAL (102 aa)) is the HD domain.

The protein belongs to the tRNA nucleotidyltransferase/poly(A) polymerase family. Bacterial CCA-adding enzyme type 1 subfamily. In terms of assembly, monomer. Can also form homodimers and oligomers. Requires Mg(2+) as cofactor. Ni(2+) serves as cofactor.

The catalysed reaction is a tRNA precursor + 2 CTP + ATP = a tRNA with a 3' CCA end + 3 diphosphate. It catalyses the reaction a tRNA with a 3' CCA end + 2 CTP + ATP = a tRNA with a 3' CCACCA end + 3 diphosphate. Functionally, catalyzes the addition and repair of the essential 3'-terminal CCA sequence in tRNAs without using a nucleic acid template. Adds these three nucleotides in the order of C, C, and A to the tRNA nucleotide-73, using CTP and ATP as substrates and producing inorganic pyrophosphate. tRNA 3'-terminal CCA addition is required both for tRNA processing and repair. Also involved in tRNA surveillance by mediating tandem CCA addition to generate a CCACCA at the 3' terminus of unstable tRNAs. While stable tRNAs receive only 3'-terminal CCA, unstable tRNAs are marked with CCACCA and rapidly degraded. The chain is Multifunctional CCA protein from Verminephrobacter eiseniae (strain EF01-2).